We begin with the raw amino-acid sequence, 326 residues long: MWTCLCQLCFYLLSTLAVAALSIAALVLYKTKPYPNIKRHKDEETFLDPHTIKTVTFPSLEDSPSLELSVIVPAYNEEQRLPSMLDECLAFLEQKSAGTPNFTYEVIVVSDGSQDATVSVALGYSKKHGAEKVRVLELIENRGKGGAVRMGMLSARGRNLLFADADGATKFPDYDKLEVALKQLAPEWRDDGIAIGSRAHLENDAIATRSFFRTILMHGFHFLVWLFAVRSIRDTQCGFKLFTRTTARKLFTSLHVERWAFDVELLYLAENLKLPMSEVAVRWTEIDGSKLTPFWSWLQMGRDLFMIWVRYLVGAWRIASIQKKEK.

Topologically, residues Met1 to Gln7 are lumenal. The helical transmembrane segment at Leu8–Leu28 threads the bilayer. The Cytoplasmic portion of the chain corresponds to Tyr29 to Lys326.

This sequence belongs to the glycosyltransferase 2 family.

The protein localises to the endoplasmic reticulum membrane. The enzyme catalyses a di-trans,poly-cis-dolichyl phosphate + UDP-alpha-D-glucose = a di-trans,poly-cis-dolichyl beta-D-glucosyl phosphate + UDP. It participates in protein modification; protein glycosylation. Its function is as follows. Required for normal production of N-glycosylated proteins in the endoplasmic reticulum (ER). Required for embryonic segmentation, dorsal-ventral patterning and gastrulation. Required for chitin orientation and shaping of the apical and lateral plasma membranes of epidermal cells during cuticle differentiation. Also required for correctly shaping apical membrane topology of the epithelia of other organs such as the midgut and the hindgut. The chain is Dolichyl-phosphate beta-glucosyltransferase (wol) from Drosophila melanogaster (Fruit fly).